Reading from the N-terminus, the 552-residue chain is Dihydroxy-acid dehydratase (552 aa).

Aspartate 78 serves as a coordination point for Mg(2+). Cysteine 119 contributes to the [2Fe-2S] cluster binding site. Residues aspartate 120 and lysine 121 each contribute to the Mg(2+) site. An N6-carboxylysine modification is found at lysine 121. Cysteine 190 is a [2Fe-2S] cluster binding site. Position 441 (glutamate 441) interacts with Mg(2+). Catalysis depends on serine 467, which acts as the Proton acceptor.

This sequence belongs to the IlvD/Edd family. In terms of assembly, homodimer. It depends on [2Fe-2S] cluster as a cofactor. Mg(2+) serves as cofactor.

The catalysed reaction is (2R)-2,3-dihydroxy-3-methylbutanoate = 3-methyl-2-oxobutanoate + H2O. The enzyme catalyses (2R,3R)-2,3-dihydroxy-3-methylpentanoate = (S)-3-methyl-2-oxopentanoate + H2O. It participates in amino-acid biosynthesis; L-isoleucine biosynthesis; L-isoleucine from 2-oxobutanoate: step 3/4. It functions in the pathway amino-acid biosynthesis; L-valine biosynthesis; L-valine from pyruvate: step 3/4. Functions in the biosynthesis of branched-chain amino acids. Catalyzes the dehydration of (2R,3R)-2,3-dihydroxy-3-methylpentanoate (2,3-dihydroxy-3-methylvalerate) into 2-oxo-3-methylpentanoate (2-oxo-3-methylvalerate) and of (2R)-2,3-dihydroxy-3-methylbutanoate (2,3-dihydroxyisovalerate) into 2-oxo-3-methylbutanoate (2-oxoisovalerate), the penultimate precursor to L-isoleucine and L-valine, respectively. The chain is Dihydroxy-acid dehydratase from Ignicoccus hospitalis (strain KIN4/I / DSM 18386 / JCM 14125).